The following is a 98-amino-acid chain: Integration host factor subunit alpha (98 aa).

The protein belongs to the bacterial histone-like protein family. In terms of assembly, heterodimer of an alpha and a beta chain.

In terms of biological role, this protein is one of the two subunits of integration host factor, a specific DNA-binding protein that functions in genetic recombination as well as in transcriptional and translational control. The polypeptide is Integration host factor subunit alpha (Mannheimia succiniciproducens (strain KCTC 0769BP / MBEL55E)).